Consider the following 299-residue polypeptide: Glycine--tRNA ligase alpha subunit (299 aa).

This sequence belongs to the class-II aminoacyl-tRNA synthetase family. In terms of assembly, tetramer of two alpha and two beta subunits.

Its subcellular location is the cytoplasm. The enzyme catalyses tRNA(Gly) + glycine + ATP = glycyl-tRNA(Gly) + AMP + diphosphate. In Synechocystis sp. (strain ATCC 27184 / PCC 6803 / Kazusa), this protein is Glycine--tRNA ligase alpha subunit (glyQ).